The chain runs to 484 residues: Protein nucleotidyltransferase YdiU (484 aa).

Residues Gly87, Gly89, Arg90, Lys110, Asp122, Gly123, Arg173, and Arg180 each contribute to the ATP site. Asp249 acts as the Proton acceptor in catalysis. The Mg(2+) site is built by Asn250 and Asp259. Asp259 contacts ATP.

This sequence belongs to the SELO family. Mg(2+) serves as cofactor. Mn(2+) is required as a cofactor.

The enzyme catalyses L-seryl-[protein] + ATP = 3-O-(5'-adenylyl)-L-seryl-[protein] + diphosphate. It carries out the reaction L-threonyl-[protein] + ATP = 3-O-(5'-adenylyl)-L-threonyl-[protein] + diphosphate. It catalyses the reaction L-tyrosyl-[protein] + ATP = O-(5'-adenylyl)-L-tyrosyl-[protein] + diphosphate. The catalysed reaction is L-histidyl-[protein] + UTP = N(tele)-(5'-uridylyl)-L-histidyl-[protein] + diphosphate. The enzyme catalyses L-seryl-[protein] + UTP = O-(5'-uridylyl)-L-seryl-[protein] + diphosphate. It carries out the reaction L-tyrosyl-[protein] + UTP = O-(5'-uridylyl)-L-tyrosyl-[protein] + diphosphate. Functionally, nucleotidyltransferase involved in the post-translational modification of proteins. It can catalyze the addition of adenosine monophosphate (AMP) or uridine monophosphate (UMP) to a protein, resulting in modifications known as AMPylation and UMPylation. This Alcanivorax borkumensis (strain ATCC 700651 / DSM 11573 / NCIMB 13689 / SK2) protein is Protein nucleotidyltransferase YdiU.